The primary structure comprises 583 residues: Nuclear distribution protein nudE homolog 1 (583 aa).

The stretch at 14-195 (ATLEDTLGWY…QDKFKKQESR (182 aa)) forms a coiled coil. Disordered stretches follow at residues 34 to 68 (LAEFRDSSRELEQELEKDIERAEKQERHHQEKAET), 211 to 339 (TFDG…TSNS), and 358 to 583 (HSVR…GETY). A compositionally biased stretch (basic and acidic residues) spans 35-67 (AEFRDSSRELEQELEKDIERAEKQERHHQEKAE). Composition is skewed to polar residues over residues 219–235 (PGSTASSPLITTPTDSK), 279–319 (RSRL…TMRT), 329–339 (SASNKLPTSNS), 379–392 (NVYSATNMPASITI), and 399–422 (SGSAASSVTGDDPTPTNIPTSTPK). Low complexity predominate over residues 453 to 469 (RPSSRASTSYATSYARP). A compositionally biased stretch (polar residues) spans 529–538 (RRGTYSSQGG).

It belongs to the nudE family. In terms of assembly, self-associates. Interacts with PAC1.

The protein localises to the cytoplasm. The protein resides in the cytoskeleton. Required for nuclear migration. The sequence is that of Nuclear distribution protein nudE homolog 1 (NDE1) from Gibberella zeae (strain ATCC MYA-4620 / CBS 123657 / FGSC 9075 / NRRL 31084 / PH-1) (Wheat head blight fungus).